Reading from the N-terminus, the 431-residue chain is Gamma-glutamyl phosphate reductase (431 aa).

Belongs to the gamma-glutamyl phosphate reductase family.

The protein localises to the cytoplasm. It carries out the reaction L-glutamate 5-semialdehyde + phosphate + NADP(+) = L-glutamyl 5-phosphate + NADPH + H(+). It participates in amino-acid biosynthesis; L-proline biosynthesis; L-glutamate 5-semialdehyde from L-glutamate: step 2/2. In terms of biological role, catalyzes the NADPH-dependent reduction of L-glutamate 5-phosphate into L-glutamate 5-semialdehyde and phosphate. The product spontaneously undergoes cyclization to form 1-pyrroline-5-carboxylate. The protein is Gamma-glutamyl phosphate reductase of Trichodesmium erythraeum (strain IMS101).